Here is a 1141-residue protein sequence, read N- to C-terminus: Isoleucine--tRNA ligase (1141 aa).

The short motif at 50-60 (PSANGMPGIHH) is the 'HIGH' region element. The 'KMSKS' region motif lies at 689–693 (KMSKR). Lys-692 contributes to the ATP binding site.

Belongs to the class-I aminoacyl-tRNA synthetase family. IleS type 2 subfamily. In terms of assembly, monomer. Requires Zn(2+) as cofactor.

Its subcellular location is the cytoplasm. The enzyme catalyses tRNA(Ile) + L-isoleucine + ATP = L-isoleucyl-tRNA(Ile) + AMP + diphosphate. Its function is as follows. Catalyzes the attachment of isoleucine to tRNA(Ile). As IleRS can inadvertently accommodate and process structurally similar amino acids such as valine, to avoid such errors it has two additional distinct tRNA(Ile)-dependent editing activities. One activity is designated as 'pretransfer' editing and involves the hydrolysis of activated Val-AMP. The other activity is designated 'posttransfer' editing and involves deacylation of mischarged Val-tRNA(Ile). The protein is Isoleucine--tRNA ligase of Bacteroides fragilis (strain ATCC 25285 / DSM 2151 / CCUG 4856 / JCM 11019 / LMG 10263 / NCTC 9343 / Onslow / VPI 2553 / EN-2).